A 227-amino-acid chain; its full sequence is MELVFIRHGLSEWNALNLFTGWRDVNLSEKGVEEAKEAGRKLKAAGFEFDIAFTSVLTRAIKTCNLVLEESNQLWVPQIKTWRLNERHYGGLQGLNKAEAAAEHGDEQVRIWRRSYDVLPPVLDPKDPNSAHNDRRYAHLPADVVPDCENLKVTLERVLPFWEDQIAPAIKAGKRVLVAAHGNSLRALAKHIEGISDADIMDLEIPTGQPLVYTLDDNLKVVSKRYL.

Residues 7-14 (RHGLSEWN), 20-21 (TG), Arg-59, 86-89 (ERHY), Lys-97, 113-114 (RR), and 182-183 (GN) each bind substrate. His-8 functions as the Tele-phosphohistidine intermediate in the catalytic mechanism. Glu-86 (proton donor/acceptor) is an active-site residue.

The protein belongs to the phosphoglycerate mutase family. BPG-dependent PGAM subfamily. As to quaternary structure, homodimer.

It carries out the reaction (2R)-2-phosphoglycerate = (2R)-3-phosphoglycerate. Its pathway is carbohydrate degradation; glycolysis; pyruvate from D-glyceraldehyde 3-phosphate: step 3/5. Catalyzes the interconversion of 2-phosphoglycerate and 3-phosphoglycerate. The chain is 2,3-bisphosphoglycerate-dependent phosphoglycerate mutase from Mannheimia succiniciproducens (strain KCTC 0769BP / MBEL55E).